Consider the following 575-residue polypeptide: Pre-hexon-linking protein IIIa (575 aa).

The interval 1 to 95 (MTSSDTFLAL…DLLNRAYTWN (95 aa)) is peripentonal hexon-tethering domain. Positions 129-243 (ANASLLTQFF…FYDYGAMEPG (115 aa)) are binding to hexon-linking protein. A Phosphoserine; by host modification is found at serine 497. A propeptide spanning residues 515–575 (GGPGFFASLR…SRRGRKLRFY (61 aa)) is cleaved from the precursor. Positions 525 to 549 (PSIGSRQPTGTAVGLRPTTPYSGSG) are disordered.

Belongs to the adenoviridae hexon-linking protein IIIa family. Interacts with hexon proteins; this interaction tethers the peripentonal hexons to hexons situated in the facet. Interacts with the penton protein (via N-terminus). Interacts with packaging protein 3; this interaction is required to promote correct genome packaging. In terms of processing, cleaved near the C-terminus by the viral protease during virion maturation to form the mature protein.

It localises to the virion. It is found in the host nucleus. In terms of biological role, structural component of the virion that acts as a cement protein on the capsid exterior which mediates the interactions between the hexons, including the peripentonal hexons, and reaches all the way to the penton vertices. Two hexon linking proteins IIIa, one from each facet, stabilize the unique edge interface between a pair of facets. As the virus enters the host cell, hexon linking proteins IIIa are shed concomitant with virion acidification in the endosome. During virus assembly, seems to play a role in the serotype specificity of the packaging of viral DNA via its interaction with packaging protein 3. In Galliformes (FAdV-1), this protein is Pre-hexon-linking protein IIIa.